The following is a 262-amino-acid chain: GDT1-like protein C186.05c (262 aa).

5 helical membrane passes run 31 to 51 (ISMI…ALLA), 57 to 77 (ASVF…AVLV), 83 to 103 (FLFP…IFGV), 208 to 228 (VLDV…VAVI), and 242 to 262 (VLFF…FQGF).

The protein belongs to the GDT1 family.

It is found in the endoplasmic reticulum membrane. The sequence is that of GDT1-like protein C186.05c from Schizosaccharomyces pombe (strain 972 / ATCC 24843) (Fission yeast).